Here is a 737-residue protein sequence, read N- to C-terminus: Elongation factor 2 (737 aa).

A tr-type G domain is found at threonine 18–arginine 262. Residues alanine 27–threonine 34, aspartate 93–histidine 97, and asparagine 147–aspartate 150 each bind GTP. Diphthamide is present on histidine 604.

The protein belongs to the TRAFAC class translation factor GTPase superfamily. Classic translation factor GTPase family. EF-G/EF-2 subfamily.

Its subcellular location is the cytoplasm. Its function is as follows. Catalyzes the GTP-dependent ribosomal translocation step during translation elongation. During this step, the ribosome changes from the pre-translocational (PRE) to the post-translocational (POST) state as the newly formed A-site-bound peptidyl-tRNA and P-site-bound deacylated tRNA move to the P and E sites, respectively. Catalyzes the coordinated movement of the two tRNA molecules, the mRNA and conformational changes in the ribosome. The protein is Elongation factor 2 (fusA) of Sulfolobus acidocaldarius (strain ATCC 33909 / DSM 639 / JCM 8929 / NBRC 15157 / NCIMB 11770).